A 242-amino-acid chain; its full sequence is Ribonuclease PH (242 aa).

Residues Arg89 and 127–129 contribute to the phosphate site; that span reads GTR.

It belongs to the RNase PH family. Homohexameric ring arranged as a trimer of dimers.

The catalysed reaction is tRNA(n+1) + phosphate = tRNA(n) + a ribonucleoside 5'-diphosphate. Its function is as follows. Phosphorolytic 3'-5' exoribonuclease that plays an important role in tRNA 3'-end maturation. Removes nucleotide residues following the 3'-CCA terminus of tRNAs; can also add nucleotides to the ends of RNA molecules by using nucleoside diphosphates as substrates, but this may not be physiologically important. Probably plays a role in initiation of 16S rRNA degradation (leading to ribosome degradation) during starvation. In Neisseria meningitidis serogroup B (strain ATCC BAA-335 / MC58), this protein is Ribonuclease PH.